A 334-amino-acid chain; its full sequence is Glyceraldehyde-3-phosphate dehydrogenase (334 aa).

Residues 10–11 (RI), D33, K77, and T119 contribute to the NAD(+) site. Residues 149–151 (SCT), T180, 209–210 (TG), and R232 each bind D-glyceraldehyde 3-phosphate. The Nucleophile role is filled by C150. N314 lines the NAD(+) pocket.

This sequence belongs to the glyceraldehyde-3-phosphate dehydrogenase family. As to quaternary structure, homotetramer.

The protein resides in the cytoplasm. It catalyses the reaction D-glyceraldehyde 3-phosphate + phosphate + NAD(+) = (2R)-3-phospho-glyceroyl phosphate + NADH + H(+). It participates in carbohydrate degradation; glycolysis; pyruvate from D-glyceraldehyde 3-phosphate: step 1/5. Its function is as follows. Catalyzes the oxidative phosphorylation of glyceraldehyde 3-phosphate (G3P) to 1,3-bisphosphoglycerate (BPG) using the cofactor NAD. The first reaction step involves the formation of a hemiacetal intermediate between G3P and a cysteine residue, and this hemiacetal intermediate is then oxidized to a thioester, with concomitant reduction of NAD to NADH. The reduced NADH is then exchanged with the second NAD, and the thioester is attacked by a nucleophilic inorganic phosphate to produce BPG. The protein is Glyceraldehyde-3-phosphate dehydrogenase (gap) of Chlamydia trachomatis serovar D (strain ATCC VR-885 / DSM 19411 / UW-3/Cx).